Reading from the N-terminus, the 64-residue chain is UPF0337 protein SAB0772 (64 aa).

Residues 1–40 (MADESKFEQAKGNVKETIGNVTDNKNLENEGKEDKASGKA) form a disordered region. Over residues 25–40 (KNLENEGKEDKASGKA) the composition is skewed to basic and acidic residues.

Belongs to the UPF0337 (CsbD) family.

This is UPF0337 protein SAB0772 from Staphylococcus aureus (strain bovine RF122 / ET3-1).